A 150-amino-acid chain; its full sequence is Large ribosomal subunit protein bL9 (150 aa).

It belongs to the bacterial ribosomal protein bL9 family.

Functionally, binds to the 23S rRNA. In Burkholderia thailandensis (strain ATCC 700388 / DSM 13276 / CCUG 48851 / CIP 106301 / E264), this protein is Large ribosomal subunit protein bL9.